A 424-amino-acid chain; its full sequence is Enolase (424 aa).

Residue glutamine 162 participates in (2R)-2-phosphoglycerate binding. Glutamate 204 acts as the Proton donor in catalysis. Residues aspartate 241, glutamate 284, and aspartate 311 each coordinate Mg(2+). Positions 336, 365, 366, and 387 each coordinate (2R)-2-phosphoglycerate. The Proton acceptor role is filled by lysine 336.

The protein belongs to the enolase family. Requires Mg(2+) as cofactor.

It localises to the cytoplasm. It is found in the secreted. The protein localises to the cell surface. The enzyme catalyses (2R)-2-phosphoglycerate = phosphoenolpyruvate + H2O. It functions in the pathway carbohydrate degradation; glycolysis; pyruvate from D-glyceraldehyde 3-phosphate: step 4/5. Catalyzes the reversible conversion of 2-phosphoglycerate (2-PG) into phosphoenolpyruvate (PEP). It is essential for the degradation of carbohydrates via glycolysis. This is Enolase from Rhizobium meliloti (strain 1021) (Ensifer meliloti).